The chain runs to 138 residues: Putative pre-16S rRNA nuclease (138 aa).

This sequence belongs to the YqgF nuclease family.

Its subcellular location is the cytoplasm. Could be a nuclease involved in processing of the 5'-end of pre-16S rRNA. This chain is Putative pre-16S rRNA nuclease, found in Porphyromonas gingivalis (strain ATCC BAA-308 / W83).